The following is a 547-amino-acid chain: MAAKEVKFAGEAREKMLRGVDILANAVKVTLGPKGRNVVIEKSFGAPRITKDGVSVAKEIELEDKFENLGAQLVREVASKTNDLAGDGTTTATVLAQAIVKEGAKAVAAGMNPMDLKRGIDLATAAAVKDIQARAKKVSSSAEVAQVGTISANGDSSIGEMIAGAMQKVGNEGVITVEEAKTAETELEVVEGMQFDRGYLSPYFITNAEKMIADLEDPFLLIFEKKLSGLQPILPVLEAVVQSGKPLVIVAEDVEGEALATLVVNKLRGGLKVAAVKAPGFGDRRKAMLEDIAILTGGQVISEDLGIKLENVTLAQLGRAKKVILEKEKTTIVDGVGEKAEIEARVAQIKAQIEETSSDYDREKLQERLAKLAGGVAVIRVGGSTEVEVKEKKDRVDDALNATRAAVEEGIVPGGGVALLRAKKAVEALSSENPDIAAGIKIVLRALEAPIRQIAENSGVEGSIVVGKVLESEGNFGFNAQTEQYVDLVAEGVVDPAKVVRTALQDASSVASLLVTTEALIAELPKKDAGMPAMPGGGMGGMGGMDF.

ATP-binding positions include 30-33 (TLGP), K51, 87-91 (DGTTT), G415, and D495.

It belongs to the chaperonin (HSP60) family. As to quaternary structure, forms a cylinder of 14 subunits composed of two heptameric rings stacked back-to-back. Interacts with the co-chaperonin GroES.

It localises to the cytoplasm. The enzyme catalyses ATP + H2O + a folded polypeptide = ADP + phosphate + an unfolded polypeptide.. In terms of biological role, together with its co-chaperonin GroES, plays an essential role in assisting protein folding. The GroEL-GroES system forms a nano-cage that allows encapsulation of the non-native substrate proteins and provides a physical environment optimized to promote and accelerate protein folding. In Azorhizobium caulinodans (strain ATCC 43989 / DSM 5975 / JCM 20966 / LMG 6465 / NBRC 14845 / NCIMB 13405 / ORS 571), this protein is Chaperonin GroEL 1.